The chain runs to 713 residues: Major surface-labeled trophozoite antigen 417 (713 aa).

A signal peptide spans 1 to 17; the sequence is MFGRFLLAIVILQLART. The Extracellular portion of the chain corresponds to 18-679; that stretch reads ACTQEADDGK…KDSGSTNKSG (662 aa). N-linked (GlcNAc...) asparagine glycosylation is found at Asn289 and Asn676. Residues 680–708 form a helical membrane-spanning segment; it reads LSTGAIAGISVAVIVVVGGLIGFLCWWFL. At 709-713 the chain is on the cytoplasmic side; that stretch reads CRGKA.

This sequence belongs to the Giardia variant surface protein family.

It is found in the cell membrane. The sequence is that of Major surface-labeled trophozoite antigen 417 (TSA 417) from Giardia intestinalis (Giardia lamblia).